A 426-amino-acid polypeptide reads, in one-letter code: Histidine--tRNA ligase (426 aa).

Belongs to the class-II aminoacyl-tRNA synthetase family. Homodimer.

It localises to the cytoplasm. It catalyses the reaction tRNA(His) + L-histidine + ATP = L-histidyl-tRNA(His) + AMP + diphosphate + H(+). This Streptococcus thermophilus (strain CNRZ 1066) protein is Histidine--tRNA ligase.